Reading from the N-terminus, the 191-residue chain is IMP cyclohydrolase (191 aa).

It belongs to the archaeal IMP cyclohydrolase family.

It catalyses the reaction IMP + H2O = 5-formamido-1-(5-phospho-D-ribosyl)imidazole-4-carboxamide. It functions in the pathway purine metabolism; IMP biosynthesis via de novo pathway; IMP from 5-formamido-1-(5-phospho-D-ribosyl)imidazole-4-carboxamide: step 1/1. Functionally, catalyzes the cyclization of 5-formylamidoimidazole-4-carboxamide ribonucleotide to IMP. The protein is IMP cyclohydrolase of Natronomonas pharaonis (strain ATCC 35678 / DSM 2160 / CIP 103997 / JCM 8858 / NBRC 14720 / NCIMB 2260 / Gabara) (Halobacterium pharaonis).